A 474-amino-acid polypeptide reads, in one-letter code: Glycogen synthase (474 aa).

Lys-15 provides a ligand contact to ADP-alpha-D-glucose.

It belongs to the glycosyltransferase 1 family. Bacterial/plant glycogen synthase subfamily.

It carries out the reaction [(1-&gt;4)-alpha-D-glucosyl](n) + ADP-alpha-D-glucose = [(1-&gt;4)-alpha-D-glucosyl](n+1) + ADP + H(+). Its pathway is glycan biosynthesis; glycogen biosynthesis. Its function is as follows. Synthesizes alpha-1,4-glucan chains using ADP-glucose. The sequence is that of Glycogen synthase from Finegoldia magna (strain ATCC 29328 / DSM 20472 / WAL 2508) (Peptostreptococcus magnus).